The primary structure comprises 299 residues: Foldase protein PrsA (299 aa).

Positions 1-19 are cleaved as a signal peptide; it reads MKKWTIAASLSIGVLALSA. Residue Cys20 is the site of N-palmitoyl cysteine attachment. A lipid anchor (S-diacylglycerol cysteine) is attached at Cys20. A PpiC domain is found at 137 to 227; the sequence is NTEIQAQHIL…HGTHIIKVND (91 aa).

The protein belongs to the PrsA family.

Its subcellular location is the cell membrane. It catalyses the reaction [protein]-peptidylproline (omega=180) = [protein]-peptidylproline (omega=0). Plays a major role in protein secretion by helping the post-translocational extracellular folding of several secreted proteins. The sequence is that of Foldase protein PrsA from Oceanobacillus iheyensis (strain DSM 14371 / CIP 107618 / JCM 11309 / KCTC 3954 / HTE831).